The sequence spans 42 residues: Crotamine-IV-3 (42 aa).

Cystine bridges form between Cys4/Cys37, Cys11/Cys31, and Cys19/Cys38.

The protein belongs to the crotamine-myotoxin family. Monomer. In terms of tissue distribution, expressed by the venom gland.

It is found in the secreted. Its function is as follows. Cationic peptide that possesses multiple functions. It acts as a cell-penetrating peptide (CPP), and as a potent voltage-gated potassium channel (Kv) inhibitor. It exhibits antimicrobial activities, and hind limb paralysis. It also induces potent blockade of neuromuscular transmission in young chicken biventer cervicis preparation and potent myotoxic effect. In mice, it induces myonecrosis, upon intramuscular or subcutaneous injections. This is Crotamine-IV-3 from Crotalus durissus cumanensis (South American rattlesnake).